The following is an 833-amino-acid chain: EF-hand domain-containing family member B (833 aa).

EF-hand domains are found at residues 561 to 596 (QKFD…ANLS) and 597 to 632 (LDDK…KDKM). Positions 574, 578, 580, 585, 610, 612, 614, and 621 each coordinate Ca(2+).

Microtubule inner protein component of sperm flagellar doublet microtubules. Interacts with STIM1 and ORAI1; the interactions take place upon Ca(2+)-store depletion and dissociate through a Ca(2+)-dependent mechanism. Interaction with STIM1 inhibits STIM1 interaction with SARAF. Expressed in airway epithelial cells.

The protein localises to the cytoplasm. The protein resides in the cytoskeleton. It localises to the cilium axoneme. Its subcellular location is the flagellum axoneme. Its function is as follows. Microtubule inner protein (MIP) part of the dynein-decorated doublet microtubules (DMTs) in cilia axoneme, which is required for motile cilia beating. Cytosolic sensor for calcium, modulates the interaction of STIM1 and ORAI1 upon store depletion and the activation of store-operated Ca(2+) entry (SOCE) and NFAT translocation from cytosol to nucleus. This chain is EF-hand domain-containing family member B, found in Homo sapiens (Human).